A 51-amino-acid polypeptide reads, in one-letter code: Insulin (51 aa).

3 disulfides stabilise this stretch: C7-C37, C19-C50, and C36-C41.

This sequence belongs to the insulin family. As to quaternary structure, heterodimer of a B chain and an A chain linked by two disulfide bonds.

The protein localises to the secreted. Functionally, insulin decreases blood glucose concentration. It increases cell permeability to monosaccharides, amino acids and fatty acids. It accelerates glycolysis, the pentose phosphate cycle, and glycogen synthesis in liver. In Balaenoptera physalus (Fin whale), this protein is Insulin (INS).